Consider the following 224-residue polypeptide: UPF0758 protein RSc2444 (224 aa).

Positions 102-224 constitute an MPN domain; that stretch reads TLESPQSVKD…VYSFLEHGKM (123 aa). The Zn(2+) site is built by H173, H175, and D186. Residues 173-186 carry the JAMM motif motif; the sequence is HNHPTGHVEPSESD.

It belongs to the UPF0758 family.

The protein is UPF0758 protein RSc2444 of Ralstonia nicotianae (strain ATCC BAA-1114 / GMI1000) (Ralstonia solanacearum).